The chain runs to 539 residues: O-phosphoserine--tRNA(Cys) ligase (539 aa).

Substrate is bound by residues 188–190 (HMT), 233–235 (SAS), 275–276 (YY), and Asn-327.

It belongs to the class-II aminoacyl-tRNA synthetase family. O-phosphoseryl-tRNA(Cys) synthetase subfamily. In terms of assembly, homotetramer. Interacts with SepCysS.

It carries out the reaction tRNA(Cys) + O-phospho-L-serine + ATP = O-phospho-L-seryl-tRNA(Cys) + AMP + diphosphate. Catalyzes the attachment of O-phosphoserine (Sep) to tRNA(Cys). The polypeptide is O-phosphoserine--tRNA(Cys) ligase (Methanosarcina barkeri (strain Fusaro / DSM 804)).